A 439-amino-acid polypeptide reads, in one-letter code: Methylenetetrahydrofolate--tRNA-(uracil-5-)-methyltransferase TrmFO (439 aa).

8-13 (GGGLAG) contacts FAD.

This sequence belongs to the MnmG family. TrmFO subfamily. FAD is required as a cofactor.

The protein localises to the cytoplasm. It catalyses the reaction uridine(54) in tRNA + (6R)-5,10-methylene-5,6,7,8-tetrahydrofolate + NADH + H(+) = 5-methyluridine(54) in tRNA + (6S)-5,6,7,8-tetrahydrofolate + NAD(+). It carries out the reaction uridine(54) in tRNA + (6R)-5,10-methylene-5,6,7,8-tetrahydrofolate + NADPH + H(+) = 5-methyluridine(54) in tRNA + (6S)-5,6,7,8-tetrahydrofolate + NADP(+). Catalyzes the folate-dependent formation of 5-methyl-uridine at position 54 (M-5-U54) in all tRNAs. This chain is Methylenetetrahydrofolate--tRNA-(uracil-5-)-methyltransferase TrmFO, found in Dictyoglomus turgidum (strain DSM 6724 / Z-1310).